The following is a 358-amino-acid chain: MSTAREQPIFSTRAHVFQIDPATKRNWIPAGKHALTVSYFYDATRNVYRIISIGGAKAIINSTVTPNMTFTKTSQKFGQWADSRANTVYGLGFGSEQQLTQFAEKFQEVKEAARLAREKSQDGGELTSTALAMASHQVPPSPLVSTNGPEEKLFRSQSADAPGPTERERLKKMLSEGSVGEVQWEAEFFALQDSNQRLAGALREANAAATQWRQQLEVQRAEAEHLRQRVAELEAQVAAEPVRAGEKEATSQSVEQLEARVQTKDQEIQTLKNQSTGPREAPDTAEREETQQQVQDLETRNAELEQQLRAMESNLEEARAERERARAEVGRAAQLLDVRLFELSELREGLARLAEAAP.

The tract at residues 1-80 is required for interaction with NFATC2; sequence MSTAREQPIF…TKTSQKFGQW (80 aa). Residues 1–113 enclose the WH1 domain; that stretch reads MSTAREQPIF…EKFQEVKEAA (113 aa). The stretch at 95–122 forms a coiled coil; sequence SEQQLTQFAEKFQEVKEAARLAREKSQD. 2 positions are modified to phosphoserine: Ser-120 and Ser-158. 2 disordered regions span residues 137-168 and 239-296; these read QVPP…TERE and AEPV…QVQD. The stretch at 190-355 forms a coiled coil; it reads ALQDSNQRLA…LREGLARLAE (166 aa). Positions 257 to 267 are enriched in basic and acidic residues; the sequence is LEARVQTKDQE. The span at 268–277 shows a compositional bias: polar residues; sequence IQTLKNQSTG. Positions 280-290 are enriched in basic and acidic residues; that stretch reads EAPDTAEREET.

It belongs to the Homer family. As to quaternary structure, tetramer. Encodes coiled-coil structures that mediate homo- and heteromultimerization. Interacts with NFATC2; interaction is calcium independent; interaction competes with PPP3CA for NFATC2 binding; interaction is reduced by AKT activation. Interacts with NFATC1 and NFATC4. Interacts with SHANK1; forms a high-order complex at least composed of SHANK1 and HOMER3; the complex formation is regulated by CAMK2A-mediated phosphorylation.

Its subcellular location is the cytoplasm. The protein resides in the postsynaptic density. It is found in the synapse. Functionally, postsynaptic density scaffolding protein. Binds and cross-links cytoplasmic regions of GRM1, GRM5, ITPR1, DNM3, RYR1, RYR2, SHANK1 and SHANK3. By physically linking GRM1 and GRM5 with ER-associated ITPR1 receptors, it aids the coupling of surface receptors to intracellular calcium release. Negatively regulates T cell activation by inhibiting the calcineurin-NFAT pathway. Acts by competing with calcineurin/PPP3CA for NFAT protein binding, hence preventing NFAT activation by PPP3CA. The chain is Homer protein homolog 3 from Rattus norvegicus (Rat).